A 1161-amino-acid polypeptide reads, in one-letter code: DNA-directed RNA polymerase subunit beta (1161 aa).

It belongs to the RNA polymerase beta chain family. As to quaternary structure, the RNAP catalytic core consists of 2 alpha, 1 beta, 1 beta' and 1 omega subunit. When a sigma factor is associated with the core the holoenzyme is formed, which can initiate transcription.

The enzyme catalyses RNA(n) + a ribonucleoside 5'-triphosphate = RNA(n+1) + diphosphate. Its function is as follows. DNA-dependent RNA polymerase catalyzes the transcription of DNA into RNA using the four ribonucleoside triphosphates as substrates. This chain is DNA-directed RNA polymerase subunit beta, found in Streptomyces avermitilis (strain ATCC 31267 / DSM 46492 / JCM 5070 / NBRC 14893 / NCIMB 12804 / NRRL 8165 / MA-4680).